A 498-amino-acid polypeptide reads, in one-letter code: Glycerol kinase (498 aa).

T12 is a binding site for ADP. ATP is bound by residues T12, T13, and S14. Residue T12 coordinates sn-glycerol 3-phosphate. R16 contacts ADP. Sn-glycerol 3-phosphate-binding residues include R82, E83, and Y134. Positions 82, 83, and 134 each coordinate glycerol. H230 carries the phosphohistidine; by HPr modification. D244 is a binding site for sn-glycerol 3-phosphate. Glycerol contacts are provided by D244 and Q245. The ADP site is built by T266 and G309. ATP contacts are provided by T266, G309, Q313, and G410. Residues G410 and N414 each coordinate ADP.

It belongs to the FGGY kinase family. As to quaternary structure, homotetramer and homodimer (in equilibrium). Post-translationally, the phosphoenolpyruvate-dependent sugar phosphotransferase system (PTS), including enzyme I, and histidine-containing protein (HPr) are required for the phosphorylation, which leads to the activation of the enzyme.

It carries out the reaction glycerol + ATP = sn-glycerol 3-phosphate + ADP + H(+). It participates in polyol metabolism; glycerol degradation via glycerol kinase pathway; sn-glycerol 3-phosphate from glycerol: step 1/1. With respect to regulation, activated by phosphorylation and inhibited by fructose 1,6-bisphosphate (FBP). Functionally, key enzyme in the regulation of glycerol uptake and metabolism. Catalyzes the phosphorylation of glycerol to yield sn-glycerol 3-phosphate. This chain is Glycerol kinase, found in Staphylococcus aureus (strain Mu50 / ATCC 700699).